Reading from the N-terminus, the 1357-residue chain is Vascular endothelial growth factor receptor 3 (1357 aa).

Positions 1 to 24 (MKRDFTFFCRIWIGIPFFSGLVNG) are cleaved as a signal peptide. 7 Ig-like C2-type domains span residues 25-121 (FSMS…YYRC), 138-244 (IFVF…VQVI), 255-343 (PEDS…RELT), 352-442 (PFIS…LNFT), 453-583 (EKEA…TTIP), 583-690 (PEGF…HRKY), and 699-785 (PRYR…ATVS). At 25–796 (FSMSPPTLDN…IGSDDKTNVE (772 aa)) the chain is on the extracellular side. N-linked (GlcNAc...) asparagine glycans are attached at residues asparagine 44, asparagine 48, asparagine 114, asparagine 216, and asparagine 271. Intrachain disulfides connect cysteine 51–cysteine 121 and cysteine 173–cysteine 225. Cysteine 272 and cysteine 331 are disulfide-bonded. Residues asparagine 360, asparagine 400, and asparagine 440 are each glycosylated (N-linked (GlcNAc...) asparagine). Cystine bridges form between cysteine 473–cysteine 562, cysteine 493–cysteine 514, and cysteine 606–cysteine 674. 6 N-linked (GlcNAc...) asparagine glycosylation sites follow: asparagine 553, asparagine 610, asparagine 660, asparagine 707, asparagine 711, and asparagine 751. An intrachain disulfide couples cysteine 720 to cysteine 772. Residues 797–817 (IVILIGTGVIAIFFWVLLLVI) traverse the membrane as a helical segment. The Cytoplasmic portion of the chain corresponds to 818-1357 (FCNVKRVNPA…DYFSSSDQAV (540 aa)). One can recognise a Protein kinase domain in the interval 866–1181 (LRLGKVLGHG…ALVEILGDLL (316 aa)). Residues 872 to 880 (LGHGAFGKV) and lysine 900 each bind ATP. The tract at residues 978–1007 (QSQVRRMIEAGQASQSEHQPSTSSTNPPRV) is disordered. The span at 989–1005 (QASQSEHQPSTSSTNPP) shows a compositional bias: polar residues. The active-site Proton acceptor is aspartate 1045. 2 positions are modified to phosphotyrosine; by autocatalysis: tyrosine 1071 and tyrosine 1076. Residues 1192 to 1212 (NVSQSSEDDGFSQASSRPPSQ) form a disordered region. 4 positions are modified to phosphotyrosine; by autocatalysis: tyrosine 1226, tyrosine 1227, tyrosine 1334, and tyrosine 1338.

Belongs to the protein kinase superfamily. Tyr protein kinase family. CSF-1/PDGF receptor subfamily. As to quaternary structure, interacts with vegfc and vegfd. Monomer in the absence of bound vegfc or vegfd. Homodimer in the presence of bound vegfc or vegfd. Post-translationally, autophosphorylated on tyrosine residues upon ligand binding. Autophosphorylation occurs in trans, i.e. one subunit of the dimeric receptor phosphorylates tyrosine residues on the other subunit.

It is found in the cell membrane. It localises to the cytoplasm. The protein resides in the nucleus. The catalysed reaction is L-tyrosyl-[protein] + ATP = O-phospho-L-tyrosyl-[protein] + ADP + H(+). With respect to regulation, present in an inactive conformation in the absence of bound ligand. Binding of vegfc or vegfd leads to dimerization and activation by autophosphorylation on tyrosine residues. Its function is as follows. Tyrosine-protein kinase that acts as a cell-surface receptor for vegf or vegfc. Combinations of multiple VEGF receptors are required for development of different blood vessel types in the embryo. Involved in angiogenesis, specifically in VEGF-induced sprouting of new blood vessels, but not required for proper vasculogenesis or hematopoiesis. This Danio rerio (Zebrafish) protein is Vascular endothelial growth factor receptor 3 (flt4).